Consider the following 282-residue polypeptide: Small ribosomal subunit protein uS3 (282 aa).

In terms of domain architecture, KH type-2 spans 43–111 (IRQLMSTGME…QVQLNILEVK (69 aa)). Residues 218-282 (QQAASAPSRG…AAVATEGSDA (65 aa)) form a disordered region. The segment covering 230 to 262 (PRRDGDDRGPRRENSGPRRDGGNLRSQRNDRNE) has biased composition (basic and acidic residues). The span at 263-276 (NAAVEAAPAAAAVA) shows a compositional bias: low complexity.

The protein belongs to the universal ribosomal protein uS3 family. As to quaternary structure, part of the 30S ribosomal subunit. Forms a tight complex with proteins S10 and S14.

Its function is as follows. Binds the lower part of the 30S subunit head. Binds mRNA in the 70S ribosome, positioning it for translation. In Renibacterium salmoninarum (strain ATCC 33209 / DSM 20767 / JCM 11484 / NBRC 15589 / NCIMB 2235), this protein is Small ribosomal subunit protein uS3.